A 318-amino-acid polypeptide reads, in one-letter code: Deoxyhypusine hydroxylase (318 aa).

Fe cation is bound by residues His-65, Glu-66, His-98, and Glu-99. HEAT-like PBS-type repeat units lie at residues 96-122 (VRHE…YYKE), 194-220 (YRYR…GFKD), 225-251 (FRHE…VLEN), and 258-284 (VRHE…FSKD). Residues His-227, Glu-228, His-260, and Glu-261 each coordinate Fe cation.

It belongs to the deoxyhypusine hydroxylase family. Fe(2+) serves as cofactor.

It localises to the cytoplasm. The protein localises to the nucleus. It carries out the reaction [eIF5A protein]-deoxyhypusine + AH2 + O2 = [eIF5A protein]-hypusine + A + H2O. It participates in protein modification; eIF5A hypusination. Functionally, catalyzes the hydroxylation of the N(6)-(4-aminobutyl)-L-lysine intermediate to form hypusine, an essential post-translational modification only found in mature eIF-5A factor. This Schizosaccharomyces pombe (strain 972 / ATCC 24843) (Fission yeast) protein is Deoxyhypusine hydroxylase (lia1).